A 119-amino-acid polypeptide reads, in one-letter code: Protein yippee-like 3 (119 aa).

Positions 19-116 (RRYSCVHCRA…IELSHMIKDN (98 aa)) constitute a Yippee domain. Zn(2+) contacts are provided by C23, C26, C79, and C82.

The protein belongs to the yippee family.

Its subcellular location is the nucleus. It is found in the nucleolus. May be involved in proliferation and apoptosis in myeloid precursor cells. This Danio rerio (Zebrafish) protein is Protein yippee-like 3 (ypel3).